The primary structure comprises 214 residues: Sugar fermentation stimulation protein homolog (214 aa).

It belongs to the SfsA family.

In Aquifex aeolicus (strain VF5), this protein is Sugar fermentation stimulation protein homolog.